The primary structure comprises 432 residues: 3-phosphoshikimate 1-carboxyvinyltransferase (432 aa).

The 3-phosphoshikimate site is built by Lys23, Ser24, and Arg28. Lys23 lines the phosphoenolpyruvate pocket. The phosphoenolpyruvate site is built by Gly95 and Arg123. Residues Ser167, Gln169, Asp316, and Lys343 each contribute to the 3-phosphoshikimate site. Gln169 provides a ligand contact to phosphoenolpyruvate. Asp316 serves as the catalytic Proton acceptor. Phosphoenolpyruvate-binding residues include Arg347 and Arg391.

Belongs to the EPSP synthase family. Monomer.

Its subcellular location is the cytoplasm. It catalyses the reaction 3-phosphoshikimate + phosphoenolpyruvate = 5-O-(1-carboxyvinyl)-3-phosphoshikimate + phosphate. It functions in the pathway metabolic intermediate biosynthesis; chorismate biosynthesis; chorismate from D-erythrose 4-phosphate and phosphoenolpyruvate: step 6/7. In terms of biological role, catalyzes the transfer of the enolpyruvyl moiety of phosphoenolpyruvate (PEP) to the 5-hydroxyl of shikimate-3-phosphate (S3P) to produce enolpyruvyl shikimate-3-phosphate and inorganic phosphate. The chain is 3-phosphoshikimate 1-carboxyvinyltransferase from Limosilactobacillus fermentum (strain NBRC 3956 / LMG 18251) (Lactobacillus fermentum).